The sequence spans 336 residues: N-acetyl-gamma-glutamyl-phosphate reductase (336 aa).

Cysteine 156 is a catalytic residue.

This sequence belongs to the NAGSA dehydrogenase family. Type 1 subfamily.

The protein localises to the cytoplasm. It catalyses the reaction N-acetyl-L-glutamate 5-semialdehyde + phosphate + NADP(+) = N-acetyl-L-glutamyl 5-phosphate + NADPH + H(+). It functions in the pathway amino-acid biosynthesis; L-arginine biosynthesis; N(2)-acetyl-L-ornithine from L-glutamate: step 3/4. Functionally, catalyzes the NADPH-dependent reduction of N-acetyl-5-glutamyl phosphate to yield N-acetyl-L-glutamate 5-semialdehyde. The polypeptide is N-acetyl-gamma-glutamyl-phosphate reductase (Moritella profunda).